Reading from the N-terminus, the 119-residue chain is Large ribosomal subunit protein bL20c (119 aa).

This sequence belongs to the bacterial ribosomal protein bL20 family.

The protein resides in the plastid. It is found in the chloroplast. Its function is as follows. Binds directly to 23S ribosomal RNA and is necessary for the in vitro assembly process of the 50S ribosomal subunit. It is not involved in the protein synthesizing functions of that subunit. The polypeptide is Large ribosomal subunit protein bL20c (Amborella trichopoda).